We begin with the raw amino-acid sequence, 156 residues long: Small ribosomal subunit protein uS7 (156 aa).

It belongs to the universal ribosomal protein uS7 family. As to quaternary structure, part of the 30S ribosomal subunit. Contacts proteins S9 and S11.

In terms of biological role, one of the primary rRNA binding proteins, it binds directly to 16S rRNA where it nucleates assembly of the head domain of the 30S subunit. Is located at the subunit interface close to the decoding center, probably blocks exit of the E-site tRNA. The polypeptide is Small ribosomal subunit protein uS7 (Bordetella petrii (strain ATCC BAA-461 / DSM 12804 / CCUG 43448)).